Reading from the N-terminus, the 312-residue chain is tRNA uridine(34) hydroxylase (312 aa).

The Rhodanese domain maps to 130–225 (RGDEVVFFDG…YGEQFGNKGL (96 aa)). Cys185 (cysteine persulfide intermediate) is an active-site residue.

This sequence belongs to the TrhO family.

It carries out the reaction uridine(34) in tRNA + AH2 + O2 = 5-hydroxyuridine(34) in tRNA + A + H2O. Catalyzes oxygen-dependent 5-hydroxyuridine (ho5U) modification at position 34 in tRNAs. The sequence is that of tRNA uridine(34) hydroxylase from Corynebacterium glutamicum (strain ATCC 13032 / DSM 20300 / JCM 1318 / BCRC 11384 / CCUG 27702 / LMG 3730 / NBRC 12168 / NCIMB 10025 / NRRL B-2784 / 534).